Reading from the N-terminus, the 113-residue chain is uncharacterized protein (113 aa).

This sequence to H.pylori HP0245/JHP0230.

This is an uncharacterized protein from Campylobacter jejuni subsp. jejuni serotype O:2 (strain ATCC 700819 / NCTC 11168).